A 67-amino-acid polypeptide reads, in one-letter code: ATP synthase F(0) complex subunit 8 (67 aa).

A helical transmembrane segment spans residues 8 to 24 (TWFITILSMLITLFILF). Position 54 is an N6-acetyllysine; alternate (lysine 54). Position 54 is an N6-succinyllysine; alternate (lysine 54). Lysine 57 carries the N6-acetyllysine modification.

It belongs to the ATPase protein 8 family. As to quaternary structure, component of the ATP synthase complex composed at least of ATP5F1A/subunit alpha, ATP5F1B/subunit beta, ATP5MC1/subunit c (homooctomer), MT-ATP6/subunit a, MT-ATP8/subunit 8, ATP5ME/subunit e, ATP5MF/subunit f, ATP5MG/subunit g, ATP5MK/subunit k, ATP5MJ/subunit j, ATP5F1C/subunit gamma, ATP5F1D/subunit delta, ATP5F1E/subunit epsilon, ATP5PF/subunit F6, ATP5PB/subunit b, ATP5PD/subunit d, ATP5PO/subunit OSCP. ATP synthase complex consists of a soluble F(1) head domain (subunits alpha(3) and beta(3)) - the catalytic core - and a membrane F(0) domain - the membrane proton channel (subunits c, a, 8, e, f, g, k and j). These two domains are linked by a central stalk (subunits gamma, delta, and epsilon) rotating inside the F1 region and a stationary peripheral stalk (subunits F6, b, d, and OSCP). Interacts with PRICKLE3.

It localises to the mitochondrion membrane. Functionally, subunit 8, of the mitochondrial membrane ATP synthase complex (F(1)F(0) ATP synthase or Complex V) that produces ATP from ADP in the presence of a proton gradient across the membrane which is generated by electron transport complexes of the respiratory chain. ATP synthase complex consist of a soluble F(1) head domain - the catalytic core - and a membrane F(1) domain - the membrane proton channel. These two domains are linked by a central stalk rotating inside the F(1) region and a stationary peripheral stalk. During catalysis, ATP synthesis in the catalytic domain of F(1) is coupled via a rotary mechanism of the central stalk subunits to proton translocation. In vivo, can only synthesize ATP although its ATP hydrolase activity can be activated artificially in vitro. Part of the complex F(0) domain. The polypeptide is ATP synthase F(0) complex subunit 8 (Dugong dugon (Dugong)).